Reading from the N-terminus, the 558-residue chain is PE cleavage protein A (558 aa).

The region spanning 1–93 is the PE domain; that stretch reads MSFLVVVPEF…SGSYAAAEAT (93 aa). Aspartate 297 is a catalytic residue.

Belongs to the mycobacterial PE family. PGRS subfamily. Post-translationally, undergoes auto-proteolytic processing.

Its subcellular location is the secreted. It localises to the cell surface. In terms of biological role, aspartic protease that processes the lipase LipY and other PE_PGRS proteins. Can also cleave itself. The chain is PE cleavage protein A from Mycobacterium tuberculosis (strain CDC 1551 / Oshkosh).